Reading from the N-terminus, the 80-residue chain is RNA-binding protein Hfq (80 aa).

The Sm domain maps to 10 to 69 (DPFLNTLRREHVPVSIYLVNGIKLQGQIESFDQYVVLLKNTVTQMVYKHAISTVVPARPV).

Belongs to the Hfq family. As to quaternary structure, homohexamer.

RNA chaperone that binds small regulatory RNA (sRNAs) and mRNAs to facilitate mRNA translational regulation in response to envelope stress, environmental stress and changes in metabolite concentrations. Also binds with high specificity to tRNAs. The protein is RNA-binding protein Hfq of Azoarcus sp. (strain BH72).